Consider the following 201-residue polypeptide: LexA repressor (201 aa).

The H-T-H motif DNA-binding region spans 29-49; the sequence is VREICKAVGLSSTSSVHFHLK. Residues Ser-125 and Lys-162 each act as for autocatalytic cleavage activity in the active site.

The protein belongs to the peptidase S24 family. As to quaternary structure, homodimer.

The catalysed reaction is Hydrolysis of Ala-|-Gly bond in repressor LexA.. Represses a number of genes involved in the response to DNA damage (SOS response), including recA and lexA. In the presence of single-stranded DNA, RecA interacts with LexA causing an autocatalytic cleavage which disrupts the DNA-binding part of LexA, leading to derepression of the SOS regulon and eventually DNA repair. The protein is LexA repressor of Clostridium botulinum (strain ATCC 19397 / Type A).